Reading from the N-terminus, the 132-residue chain is Capsid protein (132 aa).

Belongs to the Leviviricetes capsid protein family. In terms of assembly, homodimer. The capsid protein dimer binds to the viral RNA via an operator hairpin, but also many other RNA sequences in the viral genome.

It localises to the virion. Functionally, capsid protein self-assembles to form an icosahedral capsid with a T=3 symmetry, about 26 nm in diameter, and consisting of 89 capsid proteins dimers (178 capsid proteins). Involved in viral genome encapsidation through the interaction between a capsid protein dimer and the multiple packaging signals present in the RNA genome. Binding of the capsid proteins to the viral RNA induces a conformational change required for efficient T=3 shell formation. The capsid also contains 1 copy of the A2 maturation protein. In terms of biological role, acts as a translational repressor of viral replicase synthesis late in infection. This latter function is the result of capsid protein interaction with an RNA hairpin which contains the replicase ribosome-binding site. This is Capsid protein from Enterobacteria phage SP (Bacteriophage SP).